A 293-amino-acid chain; its full sequence is 33 kDa chaperonin (293 aa).

2 disulfides stabilise this stretch: C235–C237 and C267–C270.

It belongs to the HSP33 family. In terms of processing, under oxidizing conditions two disulfide bonds are formed involving the reactive cysteines. Under reducing conditions zinc is bound to the reactive cysteines and the protein is inactive.

The protein resides in the cytoplasm. Functionally, redox regulated molecular chaperone. Protects both thermally unfolding and oxidatively damaged proteins from irreversible aggregation. Plays an important role in the bacterial defense system toward oxidative stress. The sequence is that of 33 kDa chaperonin from Deinococcus radiodurans (strain ATCC 13939 / DSM 20539 / JCM 16871 / CCUG 27074 / LMG 4051 / NBRC 15346 / NCIMB 9279 / VKM B-1422 / R1).